The primary structure comprises 387 residues: MQTGHPADGVYFGLMSGTSMDGVDGVAVRFEAGKPPAVLSEAFVGFADTLRDALFALQQPGDDEIEREALAANALAARYAVCCHELLRTAGLSPDDVRALGVHGQTVRHRPERGYTRQLNNAALLAELTRIDVIADFRSRDVAAGGQGAPLVPAFHATVFGSPDETRVVCNLGGISNITILPAGGGPQGEGHARNDTVRGHDCGPANALIDAWVERHLKQPFDDGGRFAARGTVDETLLAALLDEPYFRQNAPKSTGRDLFNADWLDAKLAGFQHLAPENVQATLTALTAATVADEIARHAGDCRAVYVCGGGARNPVLLDALATALAARGLDAAVATTAALGVPPQQVESLAFAWLAYRFNARAPGNVSTVTGAAGERVLGALYPR.

Residue 17 to 24 coordinates ATP; the sequence is GTSMDGVD.

This sequence belongs to the anhydro-N-acetylmuramic acid kinase family.

The catalysed reaction is 1,6-anhydro-N-acetyl-beta-muramate + ATP + H2O = N-acetyl-D-muramate 6-phosphate + ADP + H(+). It participates in amino-sugar metabolism; 1,6-anhydro-N-acetylmuramate degradation. Its pathway is cell wall biogenesis; peptidoglycan recycling. Catalyzes the specific phosphorylation of 1,6-anhydro-N-acetylmuramic acid (anhMurNAc) with the simultaneous cleavage of the 1,6-anhydro ring, generating MurNAc-6-P. Is required for the utilization of anhMurNAc either imported from the medium or derived from its own cell wall murein, and thus plays a role in cell wall recycling. The sequence is that of Anhydro-N-acetylmuramic acid kinase from Burkholderia pseudomallei (strain 1710b).